Here is a 447-residue protein sequence, read N- to C-terminus: Na(+)-translocating NADH-quinone reductase subunit A (447 aa).

It belongs to the NqrA family. As to quaternary structure, composed of six subunits; NqrA, NqrB, NqrC, NqrD, NqrE and NqrF.

The catalysed reaction is a ubiquinone + n Na(+)(in) + NADH + H(+) = a ubiquinol + n Na(+)(out) + NAD(+). NQR complex catalyzes the reduction of ubiquinone-1 to ubiquinol by two successive reactions, coupled with the transport of Na(+) ions from the cytoplasm to the periplasm. NqrA to NqrE are probably involved in the second step, the conversion of ubisemiquinone to ubiquinol. This is Na(+)-translocating NADH-quinone reductase subunit A from Saccharophagus degradans (strain 2-40 / ATCC 43961 / DSM 17024).